The chain runs to 286 residues: Bifunctional protein FolD (286 aa).

NADP(+)-binding positions include glycine 160 to serine 162, serine 189, and threonine 230.

This sequence belongs to the tetrahydrofolate dehydrogenase/cyclohydrolase family. Homodimer.

It catalyses the reaction (6R)-5,10-methylene-5,6,7,8-tetrahydrofolate + NADP(+) = (6R)-5,10-methenyltetrahydrofolate + NADPH. The catalysed reaction is (6R)-5,10-methenyltetrahydrofolate + H2O = (6R)-10-formyltetrahydrofolate + H(+). The protein operates within one-carbon metabolism; tetrahydrofolate interconversion. In terms of biological role, catalyzes the oxidation of 5,10-methylenetetrahydrofolate to 5,10-methenyltetrahydrofolate and then the hydrolysis of 5,10-methenyltetrahydrofolate to 10-formyltetrahydrofolate. In Chlamydia pneumoniae (Chlamydophila pneumoniae), this protein is Bifunctional protein FolD.